The chain runs to 1342 residues: DNA-directed RNA polymerase subunit beta (1342 aa).

It belongs to the RNA polymerase beta chain family. The RNAP catalytic core consists of 2 alpha, 1 beta, 1 beta' and 1 omega subunit. When a sigma factor is associated with the core the holoenzyme is formed, which can initiate transcription.

It carries out the reaction RNA(n) + a ribonucleoside 5'-triphosphate = RNA(n+1) + diphosphate. Functionally, DNA-dependent RNA polymerase catalyzes the transcription of DNA into RNA using the four ribonucleoside triphosphates as substrates. This is DNA-directed RNA polymerase subunit beta from Tolumonas auensis (strain DSM 9187 / NBRC 110442 / TA 4).